The chain runs to 567 residues: Asparagine--tRNA ligase, chloroplastic/mitochondrial (567 aa).

The segment at residues Asn113–Val191 is a DNA-binding region (OB).

It belongs to the class-II aminoacyl-tRNA synthetase family.

The protein resides in the plastid. It is found in the chloroplast. It localises to the mitochondrion. It catalyses the reaction tRNA(Asn) + L-asparagine + ATP = L-asparaginyl-tRNA(Asn) + AMP + diphosphate + H(+). The protein is Asparagine--tRNA ligase, chloroplastic/mitochondrial of Arabidopsis thaliana (Mouse-ear cress).